Consider the following 233-residue polypeptide: Antiholin-like protein LrgB (233 aa).

The next 6 helical transmembrane spans lie at 5–25 (LGINTPYFGILVSLIPFVIAT), 33–53 (GFFLLAPLFVSMVAGIAFLKL), 63–83 (IGGDIINFFLEPATICFAIPL), 97–117 (IFGGIAVGTIIALLLIYLVAI), 152–172 (LTSLAVILNAVVISALGAKIV), and 212–232 (IAVVIVGVIVVAVVPILAPIL).

This sequence belongs to the CidB/LrgB family. LrgB subfamily.

The protein localises to the cell membrane. Functionally, inhibits the expression or activity of extracellular murein hydrolases by interacting, possibly with LrgA, with the holin-like proteins CidA and/or CidB. The LrgAB and CidAB proteins may affect the proton motive force of the membrane. May be involved in programmed cell death (PCD), possibly triggering PCD in response to antibiotics and environmental stresses. This is Antiholin-like protein LrgB from Staphylococcus epidermidis (strain ATCC 35984 / DSM 28319 / BCRC 17069 / CCUG 31568 / BM 3577 / RP62A).